The primary structure comprises 202 residues: MAVPAALILRESPSMKKAVSLINAIDTGRFPRLLTRILQKLHLKAESSFSEEEEEKLQAAFSLEKQDLHLVLETISFILEQAVYHNVKPAALQQQLENIHLRQDKAEAFVNTWSSMGQETVEKFRQRILAPCKLETVGWQLNLQMAHSAQAKLKSPQAVLQLGVNNEDSKSLEKVLVEFSHKELFDFYNKLETIQAQLDSLT.

Ala2 carries the N-acetylalanine modification. The COMM domain maps to 133 to 202; sequence KLETVGWQLN…TIQAQLDSLT (70 aa). Ser155 is modified (phosphoserine).

Belongs to the COMM domain-containing protein 10 family. As to quaternary structure, component of the commander complex consisting of the CCC subcomplex and the retriever subcomplex. Component of the CCC (COMMD/CCDC22/CCDC93) subcomplex consisting of COMMD1, COMMD2, COMMD3, COMMD4, COMMD5, COMMD6, COMMD7, COMMD8, COMMD9, COMMD10, CCDC22 and CCDC93; within the complex forms a heterodimer with COMMD5. Interacts with RELA, RELB, NFKB1/p105, NFKB2/p100. Interacts with CCDC22, CCDC93, SCNN1B, CUL1, CUL2, CUL3, CUL4A, CUL4B, CUL7. In terms of tissue distribution, ubiquitous.

It is found in the cytoplasm. The protein localises to the nucleus. Its function is as follows. Scaffold protein in the commander complex that is essential for endosomal recycling of transmembrane cargos; the commander complex is composed of the CCC subcomplex and the retriever subcomplex. May modulate activity of cullin-RING E3 ubiquitin ligase (CRL) complexes. May down-regulate activation of NF-kappa-B. This Homo sapiens (Human) protein is COMM domain-containing protein 10 (COMMD10).